The sequence spans 1181 residues: Protein P1-P2 (1181 aa).

The signal sequence occupies residues 1–33 (MASFLKPVNSQGLWLSLLLAITYLFLLPSAGQS). Transmembrane regions (helical) follow at residues 172–192 (LIEF…VYVA), 194–214 (AVPG…WAWP), 218–235 (ASSL…IGFL), and 240–260 (IGLI…WSLL). The Peptidase S39 domain maps to 318-515 (IPGVQIKKLR…SSSPKFTGCE (198 aa)). Residues His366, Asp396, and Ser465 each act as for protease activity in the active site. The disordered stretch occupies residues 572-688 (GLWADDTEDD…SCESSPHRPT (117 aa)). 2 stretches are compositionally biased toward basic and acidic residues: residues 598-608 (GETKSSEDPLP) and 638-648 (EESRQPQEEKG). Polar residues predominate over residues 649-677 (QSCQEDSLNSTQEIQGQSTHFVPSSGTGR). The RdRp catalytic domain maps to 979–1094 (RYLTPTDCSG…SVGSDLSQYA (116 aa)).

The protein belongs to the luteoviruses RNA polymerase family. Specific enzymatic cleavages in vivo yield mature proteins. The protease probably cleaves itself and releases the RdRp (Potential). Cleavages have been shown in the P1 protein, but since the N-terminus containing the serine protease is shared between P1 and P1-P2, cleavages should also occur within the P1-P2 protein.

It is found in the membrane. It catalyses the reaction RNA(n) + a ribonucleoside 5'-triphosphate = RNA(n+1) + diphosphate. Functionally, RNA-dependent RNA polymerase that plays an essential role in virus replication. The chain is Protein P1-P2 from Cicer arietinum (Chickpea).